We begin with the raw amino-acid sequence, 566 residues long: Serine/threonine-protein kinase PknE (566 aa).

The Cytoplasmic portion of the chain corresponds to 1–337; sequence MDGTAESREG…PLPRSARQPW (337 aa). Ser-7 carries the post-translational modification Phosphoserine; by autocatalysis. Thr-11 carries the phosphothreonine; by autocatalysis modification. The region spanning 16 to 275 is the Protein kinase domain; it reads YRLRRLVGRG…DLSAAAHAAL (260 aa). Residues 22 to 30 and Lys-45 contribute to the ATP site; that span reads VGRGGMGDV. Thr-50 and Thr-59 each carry phosphothreonine; by autocatalysis. Asp-139 functions as the Proton acceptor in the catalytic mechanism. A phosphothreonine; by autocatalysis mark is found at Thr-170, Thr-175, and Thr-178. The segment at 296–330 is disordered; that stretch reads PVPSTHPVSPGTRWPQPTPWAGGAPPWGPPSSPLP. A helical membrane pass occupies residues 338–358; that stretch reads LWVGVAVAVVVALAGGLGIAL. The Extracellular portion of the chain corresponds to 359-566; it reads AHPWRSSGPR…DPSWLARLIG (208 aa).

It belongs to the protein kinase superfamily. Ser/Thr protein kinase family. In terms of assembly, homodimer. Post-translationally, autophosphorylated on serine and threonine residues. Dephosphorylated by PstP.

The protein resides in the cell membrane. The enzyme catalyses L-seryl-[protein] + ATP = O-phospho-L-seryl-[protein] + ADP + H(+). It carries out the reaction L-threonyl-[protein] + ATP = O-phospho-L-threonyl-[protein] + ADP + H(+). Its function is as follows. A serine/threonine-protein kinase, acts on HupB in vitro, modifying at least 2 Ser and 8 Thr residues. Important for bacterial survival in the host during infection. The sequence is that of Serine/threonine-protein kinase PknE from Mycobacterium tuberculosis (strain ATCC 25177 / H37Ra).